The primary structure comprises 614 residues: Pentatricopeptide repeat-containing protein At1g63080, mitochondrial (614 aa).

The N-terminal 7 residues, 1–7 (MSLAKRF), are a transit peptide targeting the mitochondrion. 15 PPR repeats span residues 64–98 (SIVE…GVSH), 99–133 (NLYT…GYGP), 134–168 (SIVT…GYQP), 169–203 (DTVT…GCQP), 204–238 (DLVT…KIEA), 239–273 (DVVI…GIRP), 274–308 (DVFT…KINP), 309–343 (NVVT…SIDP), 344–378 (NIVT…DCLP), 379–413 (DVVT…GLVG), 414–448 (NTVT…GVHP), 449–483 (NIMT…KMEP), 484–518 (DIYT…GVKP), 519–553 (DVIA…GPLP), and 554–588 (DSGT…RFAG).

The protein belongs to the PPR family. P subfamily.

The protein localises to the mitochondrion. This Arabidopsis thaliana (Mouse-ear cress) protein is Pentatricopeptide repeat-containing protein At1g63080, mitochondrial.